Reading from the N-terminus, the 323-residue chain is Ribosomal RNA small subunit methyltransferase H (323 aa).

S-adenosyl-L-methionine-binding positions include 39-41 (GGY), Asp57, Phe84, Asp103, and Gln110.

This sequence belongs to the methyltransferase superfamily. RsmH family.

Its subcellular location is the cytoplasm. It carries out the reaction cytidine(1402) in 16S rRNA + S-adenosyl-L-methionine = N(4)-methylcytidine(1402) in 16S rRNA + S-adenosyl-L-homocysteine + H(+). Its function is as follows. Specifically methylates the N4 position of cytidine in position 1402 (C1402) of 16S rRNA. In Gluconobacter oxydans (strain 621H) (Gluconobacter suboxydans), this protein is Ribosomal RNA small subunit methyltransferase H.